Consider the following 41-residue polypeptide: Large ribosomal subunit protein bL36 (41 aa).

This sequence belongs to the bacterial ribosomal protein bL36 family.

In Beijerinckia indica subsp. indica (strain ATCC 9039 / DSM 1715 / NCIMB 8712), this protein is Large ribosomal subunit protein bL36.